Reading from the N-terminus, the 84-residue chain is Large ribosomal subunit protein bL31B (84 aa).

Belongs to the bacterial ribosomal protein bL31 family. Type B subfamily. Part of the 50S ribosomal subunit.

The chain is Large ribosomal subunit protein bL31B from Rhodococcus opacus (strain B4).